Here is a 90-residue protein sequence, read N- to C-terminus: Acylphosphatase (90 aa).

The region spanning 3–90 is the Acylphosphatase-like domain; it reads KKQFVVYGIV…HSFGLFSVEH (88 aa). Active-site residues include R18 and N36.

The protein belongs to the acylphosphatase family.

The catalysed reaction is an acyl phosphate + H2O = a carboxylate + phosphate + H(+). The chain is Acylphosphatase (acyP) from Mannheimia succiniciproducens (strain KCTC 0769BP / MBEL55E).